The primary structure comprises 150 residues: Glycine cleavage system H-like protein gcvH2 (150 aa).

One can recognise a Lipoyl-binding domain in the interval 44–126; that stretch reads VATVGLSSFG…PANNWMVKFK (83 aa).

The protein belongs to the GcvH family.

This Dictyostelium discoideum (Social amoeba) protein is Glycine cleavage system H-like protein gcvH2 (gcvH2).